Reading from the N-terminus, the 1010-residue chain is ATP-dependent DNA/RNA helicase DHX36 (1010 aa).

The tract at residues 1 to 54 (MSYDYHQNWGRDGGPRSSGGGYGGSYGGSHGGGHGGNRGSGGGGGGGGGRGGRG) is required for recruitment to cytoplasmic stress granules. Positions 1-63 (MSYDYHQNWG…GRHPGHLKGR (63 aa)) are disordered. Residues 1–107 (MSYDYHQNWG…IVQLLHSVQT (107 aa)) are required for the pre-miR-134 transport. The tract at residues 1-202 (MSYDYHQNWG…KKTDLRYIEM (202 aa)) is necessary for nuclear and nucleolar caps localizations. Over residues 16–51 (RSSGGGYGGSYGGSHGGGHGGNRGSGGGGGGGGGRG) the composition is skewed to gly residues. Residues 56–78 (HPGHLKGREIGLWYAKKQGQKNK) form a DSM (DHX36-specific motif) region. Residues 56–108 (HPGHLKGREIGLWYAKKQGQKNKEAERQERAVVHMDERREEQIVQLLHSVQTK) form a required for G4-DNA- and G4-RNA-binding region. RecA-like domain stretches follow at residues 109–388 (NDKD…MIHI) and 389–630 (PGFT…DYQL). The 171-residue stretch at 219 to 389 (VNMIDNHQVT…FGNCPMIHIP (171 aa)) folds into the Helicase ATP-binding domain. 235 to 240 (GCGKTT) is a binding site for ATP. A necessary for interaction with single-stranded DNA at the 3'-end of the G4-DNA structure region spans residues 267–319 (RRISAISVAERVAAERAESCGNGNSTGYQIRLQSRLPRKQGSILYCTTGIILQ). Residues 336–339 (DEIH) carry the DEAH box motif. Mg(2+) contacts are provided by Glu337 and His339. The Helicase C-terminal domain maps to 479–649 (ALIRYIVLEE…ELCLQIKILR (171 aa)). Residues 500 to 559 (WDNISTLHDLLMSQVMFKSDKFIIIPLHSLMPTVNQTQVFKRTPPGVRKIVIATNIAETS) are necessary for interaction with single-stranded DNA at the 3'-end of the G4-DNA structure. Positions 519–530 (DKFIIIPLHSLM) match the Nuclear localization signal motif. Residues Ser559 and 604-607 (RAGR) each bind ATP. Residues 631 to 700 (PEILRTPLEE…LGVHLARLPV (70 aa)) are WH domain. Necessary for interaction with single-stranded DNA at the 3'-end of the G4-DNA structure stretches follow at residues 640 to 699 (ELCL…ARLP), 851 to 862 (NLGKKRKMVKVY), and 872 to 902 (HPKS…IYLY). Residues 843–907 (PKVAKIRLNL…SIYLYDCTEV (65 aa)) form an OB-fold-like subdomains region. Lys949 bears the N6-acetyllysine mark. Ser965 carries the phosphoserine modification.

In terms of assembly, found in a multi-helicase-TICAM1 complex at least composed of DHX36, DDX1, DDX21 and TICAM1; this complex exists in resting cells with or without dsRNA poly(I:C) ligand stimulation. Interacts (via C-terminus) with TICAM1 (via TIR domain). Interacts (via C-terminus) with DDX21; this interaction serves as bridges to TICAM1. Interacts with TERT; this interaction is dependent on the ability of DHX36 to bind to the G-quadruplex RNA (G4-RNA) structure present in the telomerase RNA template component (TERC). Interacts with DKC1; this interaction is dependent on the ability of DHX36 to bind to the G4-RNA structure present in TERC. Interacts with PARN; this interaction stimulates PARN to enhance uPA mRNA decay. Interacts with EXOSC3; this interaction occurs in a RNase-insensitive manner. Interacts with EXOSC10; this interaction occurs in a RNase-insensitive manner. Interacts with ILF3; this interaction occurs in a RNA-dependent manner. Interacts with ELAVL1; this interaction occurs in an RNA-dependent manner. Interacts with DDX5; this interaction occurs in a RNA-dependent manner. Interacts with DDX17; this interaction occurs in a RNA-dependent manner. Interacts with HDAC1; this interaction occurs in a RNA-dependent manner. Interacts with HDAC3; this interaction occurs in a RNA-dependent manner. Interacts with HDAC4. Interacts with AGO1. Interacts with AGO2. Interacts with ERCC6. The cofactor is Mg(2+).

The protein localises to the nucleus. The protein resides in the cytoplasm. Its subcellular location is the cytosol. It localises to the stress granule. It is found in the nucleus speckle. The protein localises to the chromosome. The protein resides in the telomere. Its subcellular location is the mitochondrion. It localises to the perikaryon. It is found in the cell projection. The protein localises to the dendrite. The protein resides in the axon. It catalyses the reaction ATP + H2O = ADP + phosphate + H(+). Its activity is regulated as follows. ATPase activity is enhanced in the presence of homomeric poly(U) RNAs, but not by double-stranded DNA (dsDNA), double-stranded RNA (dsRNA) and tRNA. Multifunctional ATP-dependent helicase that unwinds G-quadruplex (G4) structures. Plays a role in many biological processes such as genomic integrity, gene expression regulations and as a sensor to initiate antiviral responses. G4 structures correspond to helical structures containing guanine tetrads. Binds with high affinity to and unwinds G4 structures that are formed in nucleic acids (G4-DNA and G4-RNA). Plays a role in genomic integrity. Converts the G4-RNA structure present in telomerase RNA template component (TREC) into a double-stranded RNA to promote P1 helix formation that acts as a template boundary ensuring accurate reverse transcription. Plays a role in transcriptional regulation. Resolves G4-DNA structures in promoters of genes, such as YY1, KIT/c-kit and ALPL and positively regulates their expression. Plays a role in post-transcriptional regulation. Unwinds a G4-RNA structure located in the 3'-UTR polyadenylation site of the pre-mRNA TP53 and stimulates TP53 pre-mRNA 3'-end processing in response to ultraviolet (UV)-induced DNA damage. Binds to the precursor-microRNA-134 (pre-miR-134) terminal loop and regulates its transport into the synapto-dendritic compartment. Involved in the pre-miR-134-dependent inhibition of target gene expression and the control of dendritic spine size. Plays a role in the regulation of cytoplasmic mRNA translation and mRNA stability. Binds to both G4-RNA structures and alternative non-quadruplex-forming sequence within the 3'-UTR of the PITX1 mRNA regulating negatively PITX1 protein expression. Binds to both G4-RNA structure in the 5'-UTR and AU-rich elements (AREs) localized in the 3'-UTR of NKX2-5 mRNA to either stimulate protein translation or induce mRNA decay in an ELAVL1-dependent manner, respectively. Also binds to ARE sequences present in several mRNAs mediating exosome-mediated 3'-5' mRNA degradation. Involved in cytoplasmic urokinase-type plasminogen activator (uPA) mRNA decay. Component of a multi-helicase-TICAM1 complex that acts as a cytoplasmic sensor of viral double-stranded RNA (dsRNA) and plays a role in the activation of a cascade of antiviral responses including the induction of pro-inflammatory cytokines via the adapter molecule TICAM1. Required for the early embryonic development and hematopoiesis. Involved in the regulation of cardioblast differentiation and proliferation during heart development. Involved in spermatogonia differentiation. May play a role in ossification. This chain is ATP-dependent DNA/RNA helicase DHX36, found in Bos taurus (Bovine).